Here is a 792-residue protein sequence, read N- to C-terminus: RAD50-interacting protein 1 (792 aa).

The disordered stretch occupies residues 1–22 (MLPAGEIGASPAAPCCSESGDE). The stretch at 103-124 (IRSALKNAEESKQFLNQFLEQE) forms a coiled coil. The RINT1/TIP20 domain occupies 220–792 (WHKILKDKLT…LRTNWPNTGK (573 aa)).

This sequence belongs to the RINT1 family. In terms of assembly, component of the NRZ complex composed of NBAS, ZW10 and RINT1/TIP20L; NRZ associates with SNAREs STX18, USE1L, BNIP1/SEC20L and SEC22B (the assembly has been described as syntaxin 18 complex). Interacts directly with BNIP1/SEC20L and ZW10. Interacts with UVRAG. Interacts with RAD50 during late S and G2/M phases. Interacts with RBL2, preferentially with the active, hypophosphorylated form.

It localises to the cytoplasm. It is found in the endoplasmic reticulum membrane. Functionally, involved in regulation of membrane traffic between the Golgi and the endoplasmic reticulum (ER); the function is proposed to depend on its association in the NRZ complex which is believed to play a role in SNARE assembly at the ER. May play a role in cell cycle checkpoint control. Essential for telomere length control. This chain is RAD50-interacting protein 1 (RINT1), found in Homo sapiens (Human).